We begin with the raw amino-acid sequence, 492 residues long: N-succinylglutamate 5-semialdehyde dehydrogenase (492 aa).

220 to 225 (GSASTG) is an NAD(+) binding site. Residues Glu243 and Cys277 contribute to the active site.

The protein belongs to the aldehyde dehydrogenase family. AstD subfamily.

The enzyme catalyses N-succinyl-L-glutamate 5-semialdehyde + NAD(+) + H2O = N-succinyl-L-glutamate + NADH + 2 H(+). It participates in amino-acid degradation; L-arginine degradation via AST pathway; L-glutamate and succinate from L-arginine: step 4/5. Functionally, catalyzes the NAD-dependent reduction of succinylglutamate semialdehyde into succinylglutamate. The chain is N-succinylglutamate 5-semialdehyde dehydrogenase from Salmonella typhi.